Here is a 131-residue protein sequence, read N- to C-terminus: Histone H2B (131 aa).

The span at 1-19 (MAPKAEKKPASKAPAEKKP) shows a compositional bias: basic and acidic residues. A disordered region spans residues 1–38 (MAPKAEKKPASKAPAEKKPAAKKTASSTDGGKKRTKAR). N6-acetyllysine; alternate occurs at positions 7 and 8. Residues K7 and K8 each participate in a glycyl lysine isopeptide (Lys-Gly) (interchain with G-Cter in SUMO); alternate cross-link. At S11 the chain carries Phosphoserine. At K12 the chain carries N6-acetyllysine. K17 is modified (N6-acetyllysine; alternate). Residue K17 forms a Glycyl lysine isopeptide (Lys-Gly) (interchain with G-Cter in SUMO); alternate linkage. K18 is covalently cross-linked (Glycyl lysine isopeptide (Lys-Gly) (interchain with G-Cter in SUMO)). K125 is covalently cross-linked (Glycyl lysine isopeptide (Lys-Gly) (interchain with G-Cter in ubiquitin)).

The protein belongs to the histone H2B family. As to quaternary structure, the nucleosome is a histone octamer containing two molecules each of H2A, H2B, H3 and H4 assembled in one H3-H4 heterotetramer and two H2A-H2B heterodimers. The octamer wraps approximately 147 bp of DNA. Post-translationally, monoubiquitinated by the UBC2-BRE1 complex to form H2BK123ub1. H2BK123ub1 gives a specific tag for epigenetic transcriptional activation and is also prerequisite for H3K4me and H3K79me formation. H2BK123ub1 also modulates the formation of double-strand breaks during meiosis and is a prerequisite for DNA-damage checkpoint activation. Phosphorylated by STE20 to form H2BS10ph during progression through meiotic prophase. May be correlated with chromosome condensation. In terms of processing, acetylated by GCN5 to form H2BK11ac and H2BK16ac. H2BK16ac can also be formed by ESA1. Acetylation of N-terminal lysines and particularly formation of H2BK11acK16ac has a positive effect on transcription. Post-translationally, sumoylation to form H2BK6su or H2BK7su, and probably also H2BK16su or H2BK17su, occurs preferentially near the telomeres and represses gene transcription.

The protein resides in the nucleus. It localises to the chromosome. Functionally, core component of nucleosome. Nucleosomes wrap and compact DNA into chromatin, limiting DNA accessibility to the cellular machineries which require DNA as a template. Histones thereby play a central role in transcription regulation, DNA repair, DNA replication and chromosomal stability. DNA accessibility is regulated via a complex set of post-translational modifications of histones, also called histone code, and nucleosome remodeling. This is Histone H2B (HTB1) from Lodderomyces elongisporus (strain ATCC 11503 / CBS 2605 / JCM 1781 / NBRC 1676 / NRRL YB-4239) (Yeast).